Consider the following 213-residue polypeptide: Glycerol-3-phosphate acyltransferase (213 aa).

6 helical membrane passes run 3–23, 48–68, 71–91, 119–139, 144–164, and 165–185; these read IIIL…GLWI, ILGV…GTLA, LPLI…LAVI, PFFL…FSMI, VVAA…GFIL, and TSYD…IIFR.

The protein belongs to the PlsY family. In terms of assembly, probably interacts with PlsX.

It localises to the cell membrane. The enzyme catalyses an acyl phosphate + sn-glycerol 3-phosphate = a 1-acyl-sn-glycero-3-phosphate + phosphate. It participates in lipid metabolism; phospholipid metabolism. In terms of biological role, catalyzes the transfer of an acyl group from acyl-phosphate (acyl-PO(4)) to glycerol-3-phosphate (G3P) to form lysophosphatidic acid (LPA). This enzyme utilizes acyl-phosphate as fatty acyl donor, but not acyl-CoA or acyl-ACP. In Lactococcus lactis subsp. cremoris (strain SK11), this protein is Glycerol-3-phosphate acyltransferase.